We begin with the raw amino-acid sequence, 884 residues long: Probable ribonuclease ZC3H12C (884 aa).

Residues 66–108 form a disordered region; it reads KPTMDTVNSGKEGKGVSEENVSSGDSEGSTSSDHESEQLSSLS. Over residues 87–96 the composition is skewed to low complexity; it reads SSGDSEGSTS. At serine 231 the chain carries Phosphoserine. In terms of domain architecture, RNase NYN spans 246–401; sequence LRPVVIDGSN…LGRHGPSLDN (156 aa). The C3H1-type zinc-finger motif lies at 411 to 436; the sequence is EHKKQPCPYGKKCTYGHKCKYYHPER. Polar residues predominate over residues 456–478; it reads AAKTTNEGGLVKSNSVPCSTKAD. 3 disordered regions span residues 456-548, 716-739, and 755-776; these read AAKT…SGVH, VGAR…KAPH, and SRLY…EGLG. A compositionally biased stretch (basic and acidic residues) spans 500-516; it reads VYQDIEEKLPTKNKLET. The segment covering 518 to 543 has biased composition (polar residues); the sequence is SVPSLVSIPATSTAKPQSTTPLSNGL.

Belongs to the ZC3H12 family. Mg(2+) is required as a cofactor.

Functionally, may function as RNase and regulate the levels of target RNA species. The chain is Probable ribonuclease ZC3H12C (Zc3h12c) from Mus musculus (Mouse).